A 36-amino-acid polypeptide reads, in one-letter code: Photosystem I reaction center subunit VIII (36 aa).

A helical membrane pass occupies residues 7-29; that stretch reads PSIFVPLVGLVFPAITMASLFIY.

It belongs to the PsaI family.

The protein resides in the plastid. It is found in the chloroplast thylakoid membrane. In terms of biological role, may help in the organization of the PsaL subunit. This chain is Photosystem I reaction center subunit VIII, found in Psilotum nudum (Whisk fern).